A 189-amino-acid chain; its full sequence is dCTP deaminase (189 aa).

DCTP-binding positions include 112–117 (KSTYAR), 136–138 (TLE), glutamine 157, tyrosine 171, and glutamine 181. The active-site Proton donor/acceptor is glutamate 138.

Belongs to the dCTP deaminase family. As to quaternary structure, homotrimer.

It carries out the reaction dCTP + H2O + H(+) = dUTP + NH4(+). It functions in the pathway pyrimidine metabolism; dUMP biosynthesis; dUMP from dCTP (dUTP route): step 1/2. In terms of biological role, catalyzes the deamination of dCTP to dUTP. In Paraburkholderia xenovorans (strain LB400), this protein is dCTP deaminase.